The sequence spans 200 residues: uncharacterized protein (200 aa).

Residues 7–29 (FFFLFSFISHAMMLTGLIGSSSF) traverse the membrane as a helical segment.

It localises to the membrane. This is an uncharacterized protein from Saccharomyces cerevisiae (strain ATCC 204508 / S288c) (Baker's yeast).